The following is a 410-amino-acid chain: Dihydrolipoyllysine-residue succinyltransferase component of 2-oxoglutarate dehydrogenase complex (410 aa).

In terms of domain architecture, Lipoyl-binding spans Ile-3–Gly-81. Lys-44 bears the N6-lipoyllysine mark. Residues Thr-112 to Leu-150 enclose the Peripheral subunit-binding (PSBD) domain. Active-site residues include His-381 and Asp-385.

The protein belongs to the 2-oxoacid dehydrogenase family. As to quaternary structure, forms a 24-polypeptide structural core with octahedral symmetry. Part of the 2-oxoglutarate dehydrogenase (OGDH) complex composed of E1 (2-oxoglutarate dehydrogenase), E2 (dihydrolipoamide succinyltransferase) and E3 (dihydrolipoamide dehydrogenase); the complex contains multiple copies of the three enzymatic components (E1, E2 and E3). (R)-lipoate is required as a cofactor.

It carries out the reaction N(6)-[(R)-dihydrolipoyl]-L-lysyl-[protein] + succinyl-CoA = N(6)-[(R)-S(8)-succinyldihydrolipoyl]-L-lysyl-[protein] + CoA. It functions in the pathway amino-acid degradation; L-lysine degradation via saccharopine pathway; glutaryl-CoA from L-lysine: step 6/6. Functionally, E2 component of the 2-oxoglutarate dehydrogenase (OGDH) complex which catalyzes the second step in the conversion of 2-oxoglutarate to succinyl-CoA and CO(2). In Buchnera aphidicola subsp. Baizongia pistaciae (strain Bp), this protein is Dihydrolipoyllysine-residue succinyltransferase component of 2-oxoglutarate dehydrogenase complex (sucB).